The chain runs to 279 residues: Biotin synthase (279 aa).

In terms of domain architecture, Radical SAM core spans 1–227; sequence MKVYLCAISN…NAMIMVAGGR (227 aa). 3 residues coordinate [4Fe-4S] cluster: cysteine 16, cysteine 20, and cysteine 23. [2Fe-2S] cluster is bound by residues cysteine 60, cysteine 95, and cysteine 153.

It belongs to the radical SAM superfamily. Biotin synthase family. In terms of assembly, homodimer. The cofactor is [4Fe-4S] cluster. Requires [2Fe-2S] cluster as cofactor.

The catalysed reaction is (4R,5S)-dethiobiotin + (sulfur carrier)-SH + 2 reduced [2Fe-2S]-[ferredoxin] + 2 S-adenosyl-L-methionine = (sulfur carrier)-H + biotin + 2 5'-deoxyadenosine + 2 L-methionine + 2 oxidized [2Fe-2S]-[ferredoxin]. It participates in cofactor biosynthesis; biotin biosynthesis; biotin from 7,8-diaminononanoate: step 2/2. In terms of biological role, catalyzes the conversion of dethiobiotin (DTB) to biotin by the insertion of a sulfur atom into dethiobiotin via a radical-based mechanism. In Nitratiruptor sp. (strain SB155-2), this protein is Biotin synthase.